We begin with the raw amino-acid sequence, 172 residues long: 3-hydroxydecanoyl-[acyl-carrier-protein] dehydratase (172 aa).

Residue His-71 is part of the active site.

Belongs to the thioester dehydratase family. FabA subfamily. In terms of assembly, homodimer.

Its subcellular location is the cytoplasm. It catalyses the reaction a (3R)-hydroxyacyl-[ACP] = a (2E)-enoyl-[ACP] + H2O. The enzyme catalyses (3R)-hydroxydecanoyl-[ACP] = (2E)-decenoyl-[ACP] + H2O. The catalysed reaction is (2E)-decenoyl-[ACP] = (3Z)-decenoyl-[ACP]. It participates in lipid metabolism; fatty acid biosynthesis. In terms of biological role, necessary for the introduction of cis unsaturation into fatty acids. Catalyzes the dehydration of (3R)-3-hydroxydecanoyl-ACP to E-(2)-decenoyl-ACP and then its isomerization to Z-(3)-decenoyl-ACP. Can catalyze the dehydratase reaction for beta-hydroxyacyl-ACPs with saturated chain lengths up to 16:0, being most active on intermediate chain length. The chain is 3-hydroxydecanoyl-[acyl-carrier-protein] dehydratase from Blochmanniella floridana.